The chain runs to 466 residues: Arginine biosynthesis bifunctional protein ArgJ, mitochondrial (466 aa).

The N-terminal 9 residues, 1–9 (MSSLVLKRF), are a transit peptide targeting the mitochondrion. Positions 183, 209, 232, 320, 461, and 466 each coordinate substrate. Catalysis depends on threonine 232, which acts as the Nucleophile.

This sequence belongs to the ArgJ family. As to quaternary structure, heterodimer of an alpha and a beta chain. The alpha and beta chains are autoproteolytically processed from a single precursor protein within the mitochondrion.

The protein resides in the mitochondrion matrix. It catalyses the reaction N(2)-acetyl-L-ornithine + L-glutamate = N-acetyl-L-glutamate + L-ornithine. The enzyme catalyses L-glutamate + acetyl-CoA = N-acetyl-L-glutamate + CoA + H(+). It participates in amino-acid biosynthesis; L-arginine biosynthesis; L-ornithine and N-acetyl-L-glutamate from L-glutamate and N(2)-acetyl-L-ornithine (cyclic): step 1/1. Its pathway is amino-acid biosynthesis; L-arginine biosynthesis; N(2)-acetyl-L-ornithine from L-glutamate: step 1/4. Its function is as follows. Catalyzes two activities which are involved in the cyclic version of arginine biosynthesis: the synthesis of acetylglutamate from glutamate and acetyl-CoA, and of ornithine by transacetylation between acetylornithine and glutamate. The protein is Arginine biosynthesis bifunctional protein ArgJ, mitochondrial of Laccaria bicolor (strain S238N-H82 / ATCC MYA-4686) (Bicoloured deceiver).